The chain runs to 505 residues: Protein dml1 (505 aa).

The segment at 330–358 (LPEDMSNHTQPVQNPEDRRTQASKGGSSK) is disordered.

It belongs to the misato family.

It is found in the mitochondrion. Functionally, involved in the partitioning of the mitochondrial organelle and mitochondrial DNA (mtDNA) inheritance. This Aspergillus fumigatus (strain ATCC MYA-4609 / CBS 101355 / FGSC A1100 / Af293) (Neosartorya fumigata) protein is Protein dml1 (dml1).